Consider the following 229-residue polypeptide: Coiled-coil domain-containing protein 134 (229 aa).

An N-terminal signal peptide occupies residues 1–22 (MDLLQFLAFLFVLLLSGMGATG). Position 148 (asparagine 148) is a short sequence motif, prevents secretion from ER. Asparagine 148 is a glycosylation site (N-linked (GlcNAc...) asparagine). Positions 193 to 229 (TDPFQKALREEEKRRKKEEKRKEIRKGPRISRSQSEL) are disordered. Positions 196–218 (FQKALREEEKRRKKEEKRKEIRK) form a coiled coil. The Nuclear localization signal signature appears at 206–213 (RRKKEEKR).

It belongs to the CCDC134 family. As to quaternary structure, interacts with TADA2A. Associates with the PCAF complex via TADA2A binding. Post-translationally, O-glycosylated, with additional sialic acid modifications. Expressed in cervical gland, cervical squamous epithelium, endometrium, stomach, kidney distal convoluted tubule, spermatogenic cells in testis, mammary gland, liver and striated muscle (at protein level). Also detected in placenta. Highest expression in testis relative to other tissues. Detected in T cells and dendritic cells; highly expressed in activated CD8(+) T cells, and also expressed at lower levels in CD4(+) T cells.

It localises to the endoplasmic reticulum lumen. The protein resides in the secreted. The protein localises to the cytoplasm. It is found in the nucleus. Its function is as follows. Molecular adapter required to prevent protein hyperglycosylation of HSP90B1: during translation, associates with nascent HSP90B1 and the STT3A catalytic component of the OST-A complex and tethers them to a specialized translocon that forms a microenvironment for HSP90B1 folding. In the CCDC134-containing translocon, STT3A associates with the SRT pseudosubstrate motif of HSP90B1, preventing access to facultative glycosylation sites until folding is completed, preventing hyperglycosylation and subsequent degradation of HSP90B1. In extracellular secreted form, promotes proliferation and activation of CD8(+) T-cells, suggesting a cytokine-like function. May inhibit ERK and JNK signaling activity. May suppress cell migration and invasion activity, via its effects on ERK and JNK signaling. May also localize in the nucleus: enhances stability of the PCAF histone acetyltransferase (HAT) complex member TADA2A and thus promotes PCAF-mediated histone acetyltransferase activity. Has a critical role in the regulation of osteogenesis and bone development. This Homo sapiens (Human) protein is Coiled-coil domain-containing protein 134.